Reading from the N-terminus, the 129-residue chain is Small ribosomal subunit protein uS11 (129 aa).

It belongs to the universal ribosomal protein uS11 family. In terms of assembly, part of the 30S ribosomal subunit. Interacts with proteins S7 and S18. Binds to IF-3.

Located on the platform of the 30S subunit, it bridges several disparate RNA helices of the 16S rRNA. Forms part of the Shine-Dalgarno cleft in the 70S ribosome. The protein is Small ribosomal subunit protein uS11 of Yersinia enterocolitica serotype O:8 / biotype 1B (strain NCTC 13174 / 8081).